The chain runs to 409 residues: Peptidase T (409 aa).

Position 78 (histidine 78) interacts with Zn(2+). Residue aspartate 80 is part of the active site. Aspartate 140 lines the Zn(2+) pocket. Residue glutamate 173 is the Proton acceptor of the active site. 3 residues coordinate Zn(2+): glutamate 174, aspartate 196, and histidine 379.

It belongs to the peptidase M20B family. The cofactor is Zn(2+).

The protein localises to the cytoplasm. The enzyme catalyses Release of the N-terminal residue from a tripeptide.. Its function is as follows. Cleaves the N-terminal amino acid of tripeptides. The polypeptide is Peptidase T (Serratia proteamaculans (strain 568)).